A 302-amino-acid chain; its full sequence is Nucleotide-binding protein Rsph17025_2562 (302 aa).

15 to 22 (GPSGAGRT) contacts ATP. 62–65 (DVRN) contacts GTP.

It belongs to the RapZ-like family.

In terms of biological role, displays ATPase and GTPase activities. The polypeptide is Nucleotide-binding protein Rsph17025_2562 (Cereibacter sphaeroides (strain ATCC 17025 / ATH 2.4.3) (Rhodobacter sphaeroides)).